A 156-amino-acid polypeptide reads, in one-letter code: 6,7-dimethyl-8-ribityllumazine synthase (156 aa).

5-amino-6-(D-ribitylamino)uracil is bound by residues F22, 57–59 (AYE), and 81–83 (TVI). 86–87 (GT) serves as a coordination point for (2S)-2-hydroxy-3-oxobutyl phosphate. The Proton donor role is filled by H89. Residue F114 coordinates 5-amino-6-(D-ribitylamino)uracil. Residue R128 participates in (2S)-2-hydroxy-3-oxobutyl phosphate binding.

This sequence belongs to the DMRL synthase family. As to quaternary structure, forms an icosahedral capsid composed of 60 subunits, arranged as a dodecamer of pentamers.

It carries out the reaction (2S)-2-hydroxy-3-oxobutyl phosphate + 5-amino-6-(D-ribitylamino)uracil = 6,7-dimethyl-8-(1-D-ribityl)lumazine + phosphate + 2 H2O + H(+). Its pathway is cofactor biosynthesis; riboflavin biosynthesis; riboflavin from 2-hydroxy-3-oxobutyl phosphate and 5-amino-6-(D-ribitylamino)uracil: step 1/2. Its function is as follows. Catalyzes the formation of 6,7-dimethyl-8-ribityllumazine by condensation of 5-amino-6-(D-ribitylamino)uracil with 3,4-dihydroxy-2-butanone 4-phosphate. This is the penultimate step in the biosynthesis of riboflavin. The chain is 6,7-dimethyl-8-ribityllumazine synthase from Yersinia pseudotuberculosis serotype O:1b (strain IP 31758).